A 270-amino-acid chain; its full sequence is Oxidoreductase claK (270 aa).

Belongs to the avfA family.

Its pathway is pigment biosynthesis. In terms of biological role, oxidoreductase; part of the gene cluster that mediates the biosynthesis of the bianthraquinone cladofulvin, a conidial pigment not required for virulence but that plays a role in fitness and resistance to environmental stresses including UV light and low-temperature stress. The pathway begins with the synthesis of atrochrysone thioester by the polyketide synthase (PKS) claG. The atrochrysone carboxyl ACP thioesterase claF then breaks the thioester bond and releases the atrochrysone carboxylic acid from claG. This compound is decarboxylated by claH to yield emodin, which is further converted to chrysophanol hydroquinone by the reductase claC and the dehydratase claB. The cytochrome monooxygenase P450 claM then catalyzes the dimerization of nataloe-emodin to cladofulvin. In Passalora fulva (Tomato leaf mold), this protein is Oxidoreductase claK.